A 456-amino-acid polypeptide reads, in one-letter code: GTPase Der (456 aa).

EngA-type G domains lie at 4–169 (PVVA…PSKD) and 178–353 (VQLA…DQSR). Residues 10–17 (GRPNVGKS), 57–61 (DTGGL), 120–123 (NKCE), 184–191 (GRPNVGKS), 231–235 (DTAGI), and 296–299 (NKWD) each bind GTP. Residues 354–439 (RRVTTSVVNE…PIKLFWRGKQ (86 aa)) form the KH-like domain.

Belongs to the TRAFAC class TrmE-Era-EngA-EngB-Septin-like GTPase superfamily. EngA (Der) GTPase family. In terms of assembly, associates with the 50S ribosomal subunit.

Its function is as follows. GTPase that plays an essential role in the late steps of ribosome biogenesis. This chain is GTPase Der, found in Prochlorococcus marinus (strain NATL1A).